The following is a 106-amino-acid chain: Nucleoid-associated protein Abu_0429 (106 aa).

Belongs to the YbaB/EbfC family. As to quaternary structure, homodimer.

The protein resides in the cytoplasm. It is found in the nucleoid. In terms of biological role, binds to DNA and alters its conformation. May be involved in regulation of gene expression, nucleoid organization and DNA protection. In Aliarcobacter butzleri (strain RM4018) (Arcobacter butzleri), this protein is Nucleoid-associated protein Abu_0429.